The primary structure comprises 323 residues: Transcription factor JunD (323 aa).

2 disordered regions span residues 138-173 and 197-221; these read QNQL…APGL and PFAA…QIVP. Gly residues predominate over residues 141–167; sequence LGGGGGPNGGAAAAGGGGGGGGGGGGE. The span at 198 to 212 shows a compositional bias: pro residues; sequence FAAPPPRLPPPPPPP. Positions 242-269 are basic motif; sequence RIKAERKRLRNRIAASKCRKRKLERISR. The 64-residue stretch at 242–305 folds into the bZIP domain; the sequence is RIKAERKRLR…AQLKQKVLSH (64 aa). Positions 270–298 are leucine-zipper; sequence LEEKVKSLKSQNTELASTASLLREQVAQL.

The protein belongs to the bZIP family. Jun subfamily. Binds DNA as a dimer.

It is found in the nucleus. The polypeptide is Transcription factor JunD (JUND) (Gallus gallus (Chicken)).